The sequence spans 424 residues: 3-phosphoshikimate 1-carboxyvinyltransferase (424 aa).

Residues Lys21, Ser22, and Arg26 each coordinate 3-phosphoshikimate. Phosphoenolpyruvate is bound at residue Lys21. Positions 92 and 120 each coordinate phosphoenolpyruvate. Positions 163, 164, 165, 191, 306, and 333 each coordinate 3-phosphoshikimate. Gln165 is a binding site for phosphoenolpyruvate. The Proton acceptor role is filled by Asp306. Phosphoenolpyruvate is bound by residues Arg337, Arg379, and Lys405.

The protein belongs to the EPSP synthase family. In terms of assembly, monomer.

The protein resides in the cytoplasm. The catalysed reaction is 3-phosphoshikimate + phosphoenolpyruvate = 5-O-(1-carboxyvinyl)-3-phosphoshikimate + phosphate. The protein operates within metabolic intermediate biosynthesis; chorismate biosynthesis; chorismate from D-erythrose 4-phosphate and phosphoenolpyruvate: step 6/7. Functionally, catalyzes the transfer of the enolpyruvyl moiety of phosphoenolpyruvate (PEP) to the 5-hydroxyl of shikimate-3-phosphate (S3P) to produce enolpyruvyl shikimate-3-phosphate and inorganic phosphate. This is 3-phosphoshikimate 1-carboxyvinyltransferase from Clostridium perfringens (strain 13 / Type A).